The following is a 436-amino-acid chain: Histone acetyltransferase RTT109 (436 aa).

In terms of domain architecture, Rtt109-type HAT spans 2–404 (SLNDFLSSVL…LQSLTGKREH (403 aa)). Acetyl-CoA is bound by residues 88 to 90 (ADT) and 97 to 101 (RVSVR). Positions 128 to 170 (RSYKKISPELISAASTPARTLRILARRLKQSGSTVLKEIESPR) are interaction with VPS75. Acetyl-CoA-binding positions include F192, A196, 211–213 (HIL), and W221. D288 acts as the Proton donor/acceptor in catalysis. N6-acetyllysine; by autocatalysis is present on K290. The segment at 419–433 (LAITMLKPRKKAKAL) is interaction with ASF1.

The protein belongs to the RTT109 family. As to quaternary structure, forms a complex composed of two RTT109 subunits and one VPS75 homodimer; each RTT109 subunit interacts predominantly with VPS75 instead of interacting with the other RTT109 subunit. Interacts with VPS75; the interaction is direct. Interacts (via C-terminus) with ASF1; the interaction is direct. Interacts with histone H3/H4 heterodimers via histone H3.

The protein resides in the nucleus. The catalysed reaction is L-lysyl-[histone] + acetyl-CoA = N(6)-acetyl-L-lysyl-[histone] + CoA + H(+). The enzyme catalyses L-lysyl-[protein] + acetyl-CoA = N(6)-acetyl-L-lysyl-[protein] + CoA + H(+). Histone chaperone-dependent acetylase that modifies 'Lys-9', 'Lys-14', 'Lys-23', 'Lys-27', and 'Lys-56' on histone H3 (H3K9Ac, H3K14Ac and H3K23Ac, H3K27Ac, and H3K56Ac) to promote nucleosome assembly, genomic stability, DNA repair and transcriptional regulation during mitotic S-phase. Its residue selectivity is influenced by the acetylation status of histone H3, and also the presence of histone chaperone ASF1 that shifts selectivity to 'Lys-56' when H3K14Ac is already present. H3K56 acetylation weakens the interaction between the histone core and the surrounding DNA in the nucleosomal particle and drives chromatin disassembly. Autoacetylates. Independently of acetyltransferase activity, stimulates histone deposition by VPS75. Involved in regulation of Ty1 transposition. The sequence is that of Histone acetyltransferase RTT109 from Saccharomyces cerevisiae (strain ATCC 204508 / S288c) (Baker's yeast).